The primary structure comprises 331 residues: UDP-xylose and UDP-N-acetylglucosamine transporter (331 aa).

10 consecutive transmembrane segments (helical) span residues 5–25 (FAVT…ELLV), 30–50 (GCGN…GFIF), 59–79 (PQIP…VSVI), 92–112 (LHMI…IIIL), 122–142 (LSIV…AKQV), 153–173 (GVYA…ALLM), 201–221 (CLPL…AVLF), 238–260 (VMWF…VFIL), 267–289 (LTVT…LYFQ), and 301–321 (AVVF…PAAF).

The protein belongs to the nucleotide-sugar transporter family. SLC35B subfamily.

The protein resides in the golgi apparatus membrane. Functionally, sugar transporter that specifically mediates the transport of UDP-xylose (UDP-Xyl) and UDP-N-acetylglucosamine (UDP-GlcNAc) from cytosol into Golgi. The polypeptide is UDP-xylose and UDP-N-acetylglucosamine transporter (slc35b4) (Danio rerio (Zebrafish)).